Reading from the N-terminus, the 440-residue chain is Transposon Ty1-GR1 Gag polyprotein (440 aa).

A compositionally biased stretch (low complexity) spans 1–16 (MESQQLSQHSHISHGS). Disordered regions lie at residues 1–93 (MESQ…MMTQ), 126–173 (PQSQ…RPPP), and 352–440 (GSRN…PGTY). Composition is skewed to polar residues over residues 48 to 60 (TKAN…TPAS), 71 to 93 (SPQT…MMTQ), and 127 to 152 (QSQF…GNTF). Low complexity predominate over residues 153-165 (TDSSSADSDMTST). Residues 299–401 (NNGIHINNKV…NSKSKTARAH (103 aa)) are RNA-binding. Residues 402 to 418 (NVSTSNNSPSTDNDSIS) show a composition bias toward low complexity. Ser-416 carries the phosphoserine modification. Positions 419–428 (KSTTEPIQLN) are enriched in polar residues. Positions 429–440 (NKHDLHLRPGTY) are enriched in basic and acidic residues.

In terms of assembly, homotrimer.

It localises to the cytoplasm. In terms of biological role, capsid protein (CA) is the structural component of the virus-like particle (VLP), forming the shell that encapsulates the retrotransposons dimeric RNA genome. The particles are assembled from trimer-clustered units and there are holes in the capsid shells that allow for the diffusion of macromolecules. CA also has nucleocapsid-like chaperone activity, promoting primer tRNA(i)-Met annealing to the multipartite primer-binding site (PBS), dimerization of Ty1 RNA and initiation of reverse transcription. The protein is Transposon Ty1-GR1 Gag polyprotein (TY1A-GR1) of Saccharomyces cerevisiae (strain ATCC 204508 / S288c) (Baker's yeast).